A 310-amino-acid polypeptide reads, in one-letter code: 5'-adenylylsulfate reductase-like 4 (310 aa).

Positions 1–22 (MEKEILLLLLVIMFLTVADVDA) are cleaved as a signal peptide. Residues 49–168 (GVESDERPRF…LVAFYSDVTG (120 aa)) enclose the Thioredoxin domain. N-linked (GlcNAc...) asparagine glycans are attached at residues Asn143 and Asn190. Residues 217–237 (LAIVFVLLRLLHLIYPTLVVF) form a helical membrane-spanning segment.

The protein resides in the membrane. This Arabidopsis thaliana (Mouse-ear cress) protein is 5'-adenylylsulfate reductase-like 4 (APRL4).